The chain runs to 236 residues: Hydroxyacylglutathione hydrolase (236 aa).

Zn(2+)-binding residues include His-52, His-54, Asp-56, His-57, His-108, Asp-125, and His-163.

Belongs to the metallo-beta-lactamase superfamily. Glyoxalase II family. In terms of assembly, monomer. Zn(2+) serves as cofactor.

It catalyses the reaction an S-(2-hydroxyacyl)glutathione + H2O = a 2-hydroxy carboxylate + glutathione + H(+). It participates in secondary metabolite metabolism; methylglyoxal degradation; (R)-lactate from methylglyoxal: step 2/2. In terms of biological role, thiolesterase that catalyzes the hydrolysis of S-D-lactoyl-glutathione to form glutathione and D-lactic acid. This chain is Hydroxyacylglutathione hydrolase, found in Mannheimia succiniciproducens (strain KCTC 0769BP / MBEL55E).